The following is a 375-amino-acid chain: Delta(9) fatty acid conjugase-like enzyme (375 aa).

2 helical membrane-spanning segments follow: residues 38–58 (LSLS…LFYV) and 66–86 (LPYS…GAFL). Residues 94 to 98 (HECGH) carry the Histidine box-1 motif. A Histidine box-2 motif is present at residues 130 to 134 (HRNHH). The next 3 membrane-spanning stretches (helical) occupy residues 168 to 188 (FGLV…YLIF), 219 to 239 (VFFS…IAIA), and 241 to 261 (GAML…AFIF). Residues 307 to 311 (HVVHH) carry the Histidine box-3 motif.

It belongs to the fatty acid desaturase type 1 family.

It localises to the membrane. Functionally, involved in the biosynthesis of dimorphecolic acid (9-OH-18:2(10E,12E)). Catalyzes the formation of the C-9 hydroxyl group and the (E)-delta(10) double bond from the trans-linoleic acid (16:2(9Z,12E)) produced by FAD2-1. Very limited activity with cis-linoleic acid (16:2(9Z,12Z)). The sequence is that of Delta(9) fatty acid conjugase-like enzyme from Dimorphotheca sinuata (African daisy).